A 257-amino-acid polypeptide reads, in one-letter code: MAKLVNKLVDSFDHDEAPAPDVGCVRAVLAELVLTFLFVFTGVSASMAAGAGGKPGEAMPMATLAAVAIAHALAAGVLVTAGFHVSGGHLNPAVTVGILVRGHITKLRALLYVAAQLLASSLACILLRYLSGGMVTPVHALGAGIRPMQGLVMEVILTFSLLFVTYAMILDPRSQVRTIGPLLTGLIVGANSLAGGNFTGASMNPARSFGPAMATGVWTNHWVYWIGPLLGGSLAGFVYESLFMVNKTHEPLLNGDI.

The next 2 membrane-spanning stretches (helical) occupy residues L32–G52 and T63–F83. An NPA 1 motif is present at residues N91–A93. 3 helical membrane passes run L107–L127, G150–L170, and T178–F198. The short motif at N204–A206 is the NPA 2 element. Residues W225–V245 traverse the membrane as a helical segment.

This sequence belongs to the MIP/aquaporin (TC 1.A.8) family. TIP (TC 1.A.8.10) subfamily.

The protein localises to the vacuole membrane. Functionally, aquaporins facilitate the transport of water and small neutral solutes across cell membranes. This chain is Aquaporin TIP4-2 (TIP4-2), found in Zea mays (Maize).